The chain runs to 828 residues: Isethionate sulfite-lyase (828 aa).

Positions 30–698 constitute a PFL domain; that stretch reads ERVFTILESF…VVSATPNGRK (669 aa). 2-hydroxyethane-1-sulfonate contacts are provided by residues Arg187, Gln191, 466–468, and Arg676; that span reads CTE. Cys466 functions as the Cysteine radical intermediate in the catalytic mechanism. The Proton acceptor role is filled by Glu468. The region spanning 705–828 is the Glycine radical domain; sequence DGSSASHGAD…LIARTGHDVM (124 aa). Gly803 carries the glycine radical modification.

Belongs to the glycyl radical enzyme (GRE) family. Homodimer. Requires the activating protein IseH to generate the key active site glycyl radical on Gly-803 that is involved in catalysis.

The catalysed reaction is 2-hydroxyethane-1-sulfonate = acetaldehyde + sulfite + H(+). Its pathway is organosulfur degradation; alkanesulfonate degradation. In terms of biological role, involved in an anaerobic respiration pathway that converts the sulfonate isethionate (2-hydroxyethanesulfonate) to ammonia, acetate and sulfide. Catalyzes the radical-mediated C-S bond cleavage of isethionate (2-hydroxyethanesulfonate) to form sulfite and acetaldehyde. Shows no activity with taurine or ethanolamine as substrates. The chain is Isethionate sulfite-lyase from Nitratidesulfovibrio vulgaris (strain ATCC 29579 / DSM 644 / CCUG 34227 / NCIMB 8303 / VKM B-1760 / Hildenborough) (Desulfovibrio vulgaris).